Consider the following 408-residue polypeptide: tRNA-specific 2-thiouridylase MnmA (408 aa).

Residues 38 to 45 and M64 each bind ATP; that span reads GMSGGVDS. The segment at 124–126 is interaction with target base in tRNA; the sequence is NPD. C129 functions as the Nucleophile in the catalytic mechanism. The cysteines at positions 129 and 231 are disulfide-linked. An ATP-binding site is contributed by G153. Positions 181–183 are interaction with tRNA; the sequence is KDQ. Residue C231 is the Cysteine persulfide intermediate of the active site. Positions 348–349 are interaction with tRNA; the sequence is RY.

This sequence belongs to the MnmA/TRMU family.

The protein localises to the cytoplasm. The enzyme catalyses S-sulfanyl-L-cysteinyl-[protein] + uridine(34) in tRNA + AH2 + ATP = 2-thiouridine(34) in tRNA + L-cysteinyl-[protein] + A + AMP + diphosphate + H(+). Its function is as follows. Catalyzes the 2-thiolation of uridine at the wobble position (U34) of tRNA, leading to the formation of s(2)U34. This Psychrobacter arcticus (strain DSM 17307 / VKM B-2377 / 273-4) protein is tRNA-specific 2-thiouridylase MnmA.